A 246-amino-acid chain; its full sequence is Type III pantothenate kinase (246 aa).

6 to 13 (DVGNTHSV) is an ATP binding site. Residue 103 to 106 (GADR) coordinates substrate. The active-site Proton acceptor is the Asp105. Asp125 is a K(+) binding site. Thr128 contributes to the ATP binding site. Thr179 is a binding site for substrate.

Belongs to the type III pantothenate kinase family. Homodimer. NH4(+) serves as cofactor. K(+) is required as a cofactor.

The protein localises to the cytoplasm. The catalysed reaction is (R)-pantothenate + ATP = (R)-4'-phosphopantothenate + ADP + H(+). The protein operates within cofactor biosynthesis; coenzyme A biosynthesis; CoA from (R)-pantothenate: step 1/5. Catalyzes the phosphorylation of pantothenate (Pan), the first step in CoA biosynthesis. In Thermotoga maritima (strain ATCC 43589 / DSM 3109 / JCM 10099 / NBRC 100826 / MSB8), this protein is Type III pantothenate kinase (coaX).